Reading from the N-terminus, the 385-residue chain is POU domain, class 3, transcription factor 2-B (385 aa).

Disordered regions lie at residues 106–136, 149–209, and 351–385; these read LVHP…SSNG, NGMI…TPTS, and EKRM…TSVQ. Residues 122–136 are compositionally biased toward polar residues; the sequence is STGSTHLSSMASSNG. Positions 165-178 are enriched in basic and acidic residues; it reads LRDSHDDHHGDHGH. Residues 179–196 are compositionally biased toward low complexity; sequence QQPSQTQQQQQQHSQLQG. One can recognise a POU-specific domain in the interval 204-278; it reads EDTPTSDDLE…LLNKWLEEAD (75 aa). A DNA-binding region (homeobox) is located at residues 296-355; sequence KRKKRTSIEVSVKGALESHFLKCPKPAAQEITSLADSLQLEKEVVRVWFCNRRQKEKRMT.

The protein belongs to the POU transcription factor family. Class-3 subfamily. In terms of tissue distribution, expressed in the developing brain and spinal cord. Also found in a restricted region of the auditory vesicle during development. In the adult, expression is restricted to the brain.

The protein localises to the nucleus. Its function is as follows. Transcription factor that may be implicated in patterning of the central nervous system during early development. This is POU domain, class 3, transcription factor 2-B (pou3f2-b) from Xenopus laevis (African clawed frog).